The chain runs to 441 residues: DILAAFRVTPQPGVPPEEAGAAVAAESSTGTWTTVWTDGLTSLDRYKGRCYHIEXVPGEEDQFIAYVAYPLDLFEEGSVTNMLTSIVGNVFGFKALRALRLEDLRIPPAYVKTFQGPPHGIQVERDKLNKYGRPLLRCTIKPKLGLSAKNYGRAVYECLRGGLDFTKDDENVNSQPFMRWRDRFLFCAEAIFKSQAETGEIKGHYLNATAGTCEEMYKRAIFARELGVPIVMHDYLTGGFTANTSLAHYCRDNGLLLHIHXXMHAVIDRQKNHGMHFRVLAKALRMSGGDHIYAGTVVGKLEGERDITLGFVDLLRDDFVEKDRSRGIYFTQDWVSLPGVLAVASGGIHVXHMPALTEIFGDDSVLQFGGGTLGHPWGNAPGAVANRVALEACVQARNEGRDLAVEGNEIIREASKWSPELAAACEVWKEIRFNFKAVDTL.

Substrate-binding residues include N89 and T139. K141 serves as the catalytic Proton acceptor. Residue K143 participates in substrate binding. The Mg(2+) site is built by K167, D169, and E170. K167 bears the N6-carboxylysine mark. The Proton acceptor role is filled by H260. Substrate contacts are provided by X261 and S345.

Belongs to the RuBisCO large chain family. Type I subfamily. Heterohexadecamer of 8 large chains and 8 small chains; disulfide-linked. The disulfide link is formed within the large subunit homodimers. Mg(2+) is required as a cofactor. In terms of processing, the disulfide bond which can form in the large chain dimeric partners within the hexadecamer appears to be associated with oxidative stress and protein turnover.

The protein localises to the plastid. The protein resides in the chloroplast. The enzyme catalyses 2 (2R)-3-phosphoglycerate + 2 H(+) = D-ribulose 1,5-bisphosphate + CO2 + H2O. It carries out the reaction D-ribulose 1,5-bisphosphate + O2 = 2-phosphoglycolate + (2R)-3-phosphoglycerate + 2 H(+). RuBisCO catalyzes two reactions: the carboxylation of D-ribulose 1,5-bisphosphate, the primary event in carbon dioxide fixation, as well as the oxidative fragmentation of the pentose substrate in the photorespiration process. Both reactions occur simultaneously and in competition at the same active site. This chain is Ribulose bisphosphate carboxylase large chain, found in Asclepias exaltata (Poke milkweed).